The following is a 378-amino-acid chain: uncharacterized protein (378 aa).

The active-site For GATase activity is C16. Residues 16–378 enclose the Glutamine amidotransferase type-2 domain; sequence CGLFGVIDRS…ELAKQLSEVE (363 aa).

This is an uncharacterized protein from Archaeoglobus fulgidus (strain ATCC 49558 / DSM 4304 / JCM 9628 / NBRC 100126 / VC-16).